The primary structure comprises 423 residues: Imidazolonepropionase (423 aa).

Histidine 87 and histidine 89 together coordinate Fe(3+). Histidine 87 and histidine 89 together coordinate Zn(2+). 4-imidazolone-5-propanoate contacts are provided by arginine 96, tyrosine 159, and histidine 192. Tyrosine 159 is an N-formimidoyl-L-glutamate binding site. Histidine 257 is a binding site for Fe(3+). Residue histidine 257 participates in Zn(2+) binding. Glutamate 260 is a binding site for 4-imidazolone-5-propanoate. Residue aspartate 331 participates in Fe(3+) binding. Aspartate 331 lines the Zn(2+) pocket. 2 residues coordinate N-formimidoyl-L-glutamate: asparagine 333 and glycine 335. Serine 336 provides a ligand contact to 4-imidazolone-5-propanoate.

The protein belongs to the metallo-dependent hydrolases superfamily. HutI family. Zn(2+) is required as a cofactor. Requires Fe(3+) as cofactor.

The protein localises to the cytoplasm. It catalyses the reaction 4-imidazolone-5-propanoate + H2O = N-formimidoyl-L-glutamate. Its pathway is amino-acid degradation; L-histidine degradation into L-glutamate; N-formimidoyl-L-glutamate from L-histidine: step 3/3. Functionally, catalyzes the hydrolytic cleavage of the carbon-nitrogen bond in imidazolone-5-propanoate to yield N-formimidoyl-L-glutamate. It is the third step in the universal histidine degradation pathway. This chain is Imidazolonepropionase, found in Porphyromonas gingivalis (strain ATCC BAA-308 / W83).